The sequence spans 328 residues: tRNA uridine(34) hydroxylase (328 aa).

A Rhodanese domain is found at 130 to 224 (LDEDTVVLDT…YGKDPEVQGE (95 aa)). Cysteine 184 serves as the catalytic Cysteine persulfide intermediate.

Belongs to the TrhO family.

The catalysed reaction is uridine(34) in tRNA + AH2 + O2 = 5-hydroxyuridine(34) in tRNA + A + H2O. Catalyzes oxygen-dependent 5-hydroxyuridine (ho5U) modification at position 34 in tRNAs. This chain is tRNA uridine(34) hydroxylase, found in Streptococcus pyogenes serotype M12 (strain MGAS2096).